The chain runs to 177 residues: DELTA-stichotoxin-Hcr4b (177 aa).

Residues Ala-3–Ala-12 form a plays an important role in the hemolytic activity region. Residues Gly-11–Ser-30 are N-terminal region. Phosphocholine is bound by residues Ser-54, Val-87, Ser-105, Pro-107, Tyr-133, Tyr-137, and Tyr-138. The interval Ser-105 to Lys-120 is trp-rich region, which is important for the binding to lipid membrane.

Belongs to the actinoporin family. Sea anemone subfamily. As to quaternary structure, octamer or nonamer in membranes. Monomer in the soluble state.

Its subcellular location is the secreted. The protein localises to the nematocyst. The protein resides in the target cell membrane. Functionally, pore-forming protein that forms cations-selective hydrophilic pores of around 1 nm and causes cardiac stimulation and cytolysis. Pore formation is a multi-step process that involves specific recognition of membrane sphingomyelin (but neither cholesterol nor phosphatidylcholine) using aromatic rich region and adjacent phosphocholine (POC) binding site, firm binding to the membrane (mainly driven by hydrophobic interactions) accompanied by the transfer of the N-terminal region to the lipid-water interface and finally pore formation after oligomerization of monomers. Cytolytic effects include red blood cells hemolysis, platelet aggregation and lysis, cytotoxic and cytostatic effects on fibroblasts. Lethality in mammals has been ascribed to severe vasospasm of coronary vessels, cardiac arrhythmia, and inotropic effects. Preincubation with exogenous sphingomyeline causes complete loss of hemolytic activity. In Radianthus crispa (Leathery sea anemone), this protein is DELTA-stichotoxin-Hcr4b.